Here is a 314-residue protein sequence, read N- to C-terminus: Mitochondrial RNA-splicing protein MRS3 (314 aa).

Solcar repeat units follow at residues 31-118 (APLY…CKKN), 128-210 (HHPF…STKF), and 217-310 (YNPL…AKHF). Helical transmembrane passes span 33–52 (LYHQ…SVMF), 93–112 (GVQS…FGTY), 130–149 (PFKT…ALMN), 185–204 (SYPT…FVIY), 219–238 (PLIH…AITT), and 285–298 (GWKP…PATA).

Belongs to the mitochondrial carrier (TC 2.A.29) family.

It is found in the mitochondrion inner membrane. MRS3 suppresses a mitochondrial splice defect in the first intron of the COB gene. It may act as a carrier, exerting its suppressor activity via modulation of solute concentrations in the mitochondrion (possibly of cations). The polypeptide is Mitochondrial RNA-splicing protein MRS3 (MRS3) (Saccharomyces cerevisiae (strain ATCC 204508 / S288c) (Baker's yeast)).